A 260-amino-acid polypeptide reads, in one-letter code: Sugar fermentation stimulation protein homolog (260 aa).

This sequence belongs to the SfsA family.

The polypeptide is Sugar fermentation stimulation protein homolog (Chloroflexus aggregans (strain MD-66 / DSM 9485)).